Consider the following 514-residue polypeptide: 6-phosphofructo-2-kinase/fructose-2,6-bisphosphatase 3 (514 aa).

The segment at 1 to 245 (MPLELTQSRV…VYYLMNIHVQ (245 aa)) is 6-phosphofructo-2-kinase. An ATP-binding site is contributed by 42 to 50 (GLPARGKTY). Positions 75 and 99 each coordinate beta-D-fructose 6-phosphate. Asp-125 is a catalytic residue. Positions 127 and 133 each coordinate beta-D-fructose 6-phosphate. Cys-155 is a catalytic residue. 164-169 (NIMEVK) is an ATP binding site. Beta-D-fructose 6-phosphate contacts are provided by Lys-169, Arg-190, and Tyr-194. The tract at residues 246 to 514 (PRTIYLCRHG…QPLLGQACLT (269 aa)) is fructose-2,6-bisphosphatase. A beta-D-fructose 2,6-bisphosphate-binding site is contributed by Arg-253. Catalysis depends on His-254, which acts as the Tele-phosphohistidine intermediate. Beta-D-fructose 2,6-bisphosphate is bound by residues Asn-260 and Gly-266. The Proton donor/acceptor role is filled by Glu-323. Beta-D-fructose 2,6-bisphosphate contacts are provided by Tyr-334, Arg-348, Lys-352, Tyr-363, Gln-389, and Arg-393. Position 345 to 348 (345 to 348 (YALR)) interacts with ATP. ATP-binding positions include 389-393 (QAVLR) and Tyr-425. The tract at residues 444–475 (ERSEDAKKGPNPLMRRNSVTPLASPEPTKKPR) is disordered. Position 461 is a phosphoserine; by AMPK and PKA (Ser-461). At Thr-463 the chain carries Phosphothreonine. A Phosphoserine modification is found at Ser-467. Thr-471 carries the phosphothreonine; by PKC modification.

This sequence in the C-terminal section; belongs to the phosphoglycerate mutase family. Homodimer. Forms a heterodimer with PFKFB2. In terms of processing, phosphorylation by AMPK stimulates activity.

It carries out the reaction beta-D-fructose 2,6-bisphosphate + H2O = beta-D-fructose 6-phosphate + phosphate. The catalysed reaction is beta-D-fructose 6-phosphate + ATP = beta-D-fructose 2,6-bisphosphate + ADP + H(+). Catalyzes both the synthesis and degradation of fructose 2,6-bisphosphate. The chain is 6-phosphofructo-2-kinase/fructose-2,6-bisphosphatase 3 (PFKFB3) from Pongo abelii (Sumatran orangutan).